The following is a 468-amino-acid chain: Cysteine--tRNA ligase (468 aa).

Cysteine 27 lines the Zn(2+) pocket. The 'HIGH' region motif lies at 29–39 (PTVYNYFHIGN). 3 residues coordinate Zn(2+): cysteine 207, histidine 232, and glutamate 236. The short motif at 264-268 (KMAKS) is the 'KMSKS' region element. Residue lysine 267 coordinates ATP.

It belongs to the class-I aminoacyl-tRNA synthetase family. As to quaternary structure, monomer. Zn(2+) serves as cofactor.

Its subcellular location is the cytoplasm. It carries out the reaction tRNA(Cys) + L-cysteine + ATP = L-cysteinyl-tRNA(Cys) + AMP + diphosphate. This is Cysteine--tRNA ligase from Acetivibrio thermocellus (strain ATCC 27405 / DSM 1237 / JCM 9322 / NBRC 103400 / NCIMB 10682 / NRRL B-4536 / VPI 7372) (Clostridium thermocellum).